Here is a 228-residue protein sequence, read N- to C-terminus: RNA-free ribonuclease P (228 aa).

This sequence belongs to the HARP family.

It carries out the reaction Endonucleolytic cleavage of RNA, removing 5'-extranucleotides from tRNA precursor.. Its function is as follows. RNA-free RNase P that catalyzes the removal of the 5'-leader sequence from pre-tRNA to produce the mature 5'-terminus. This is RNA-free ribonuclease P from Methanopyrus kandleri (strain AV19 / DSM 6324 / JCM 9639 / NBRC 100938).